Consider the following 182-residue polypeptide: Putative pre-16S rRNA nuclease (182 aa).

The protein belongs to the YqgF nuclease family.

It localises to the cytoplasm. Its function is as follows. Could be a nuclease involved in processing of the 5'-end of pre-16S rRNA. The polypeptide is Putative pre-16S rRNA nuclease (Corynebacterium aurimucosum (strain ATCC 700975 / DSM 44827 / CIP 107346 / CN-1) (Corynebacterium nigricans)).